An 88-amino-acid polypeptide reads, in one-letter code: Cell division topological specificity factor (88 aa).

Belongs to the MinE family.

Functionally, prevents the cell division inhibition by proteins MinC and MinD at internal division sites while permitting inhibition at polar sites. This ensures cell division at the proper site by restricting the formation of a division septum at the midpoint of the long axis of the cell. In Methylibium petroleiphilum (strain ATCC BAA-1232 / LMG 22953 / PM1), this protein is Cell division topological specificity factor.